A 251-amino-acid chain; its full sequence is uncharacterized protein (251 aa).

N-linked (GlcNAc...) asparagine; by host glycans are attached at residues Asn149, Asn152, and Asn207. Residues 226-246 (YLIFIIIIIIFIILILLWIKY) form a helical membrane-spanning segment.

The protein belongs to the glycosyltransferase 32 family.

It localises to the membrane. This is an uncharacterized protein from Acanthamoeba polyphaga (Amoeba).